Reading from the N-terminus, the 366-residue chain is Putative ankyrin repeat protein RBE_0601 (366 aa).

ANK repeat units lie at residues 39–68, 94–124, 131–160, 162–186, 210–239, and 250–280; these read KHGTALNRAIKLKDEKIITELLAKKVDINE, LPDEYLYKAVHQGRLDLVQYFIEEKNFDVNT, HGGAILSIATMGEHIDVINYLLKNGAIASQ, VISAILKGNIEILEKLFEYGATAHD, KSSNSETKEDLSNYVETLKFLLEHGGNPNA, and IALSALMDEPKNDTYKDICKLLIQYGADTSK.

The polypeptide is Putative ankyrin repeat protein RBE_0601 (Rickettsia bellii (strain RML369-C)).